A 204-amino-acid polypeptide reads, in one-letter code: Potassium-transporting ATPase KdpC subunit (204 aa).

Residues 21–41 (AALVIFVGLSLVTGVLYPVVV) form a helical membrane-spanning segment.

It belongs to the KdpC family. The system is composed of three essential subunits: KdpA, KdpB and KdpC.

The protein localises to the cell inner membrane. Its function is as follows. Part of the high-affinity ATP-driven potassium transport (or Kdp) system, which catalyzes the hydrolysis of ATP coupled with the electrogenic transport of potassium into the cytoplasm. This subunit acts as a catalytic chaperone that increases the ATP-binding affinity of the ATP-hydrolyzing subunit KdpB by the formation of a transient KdpB/KdpC/ATP ternary complex. This chain is Potassium-transporting ATPase KdpC subunit, found in Ralstonia nicotianae (strain ATCC BAA-1114 / GMI1000) (Ralstonia solanacearum).